Reading from the N-terminus, the 1926-residue chain is MDLSDLGEAAAFLRRSEAELLLLQATALDGKKKCWIPDGENAYIEAEVKGSEDDGTVIVETADGESLSIKEDKIQQMNPPEFEMIEDMAMLTHLNEASVLHTLKRRYGQWMIYTYSGLFCVTINPYKWLPVYQKEVMAAYKGKRRSEAPPHIFAVANNAFQDMLHNRENQSILFTGESGAGKTVNSKHIIQYFATIAAMIESRKKQGALEDQIMQANTILEAFGNAKTLRNDNSSRFGKFIRMHFGARGMLSSVDIDIYLLEKSRVIFQQAGERNYHIFYQILSGQKELHDLLLVSANPSDFHFCSCGAVTVESLDDAEELLATEQAMDILGFLPDEKYGCYKLTGAIMHFGNMKFKQKPREEQLEADGTENADKAAFLMGINSSELVKCLIHPRIKVGNEYVTRGQTIEQVTCAVGALSKSMYERMFKWLVARINRALDAKLSRQFFIGILDITGFEILEYNSLEQLCINFTNEKLQQFFNWHMFVLEQEEYKKESIEWVSIGFGLDLQACIDLIEKPMGILSILEEECMFPKATDLTFKTKLFDNHFGKSVHLQKPKPDKKKFEAHFELVHYAGVVPYNISGWLEKNKDLLNETVVAVFQKSSNRLLASLFENYMSTDSAIPFGEKKRKKGASFQTVASLHKENLNKLMTNLKSTAPHFVRCINPNVNKIPGILDPYLVLQQLRCNGVLEGTRICREGFPNRLQYADFKQRYCILNPRTFPKSKFVSSRKAAEELLGSLEIDHTQYRFGITKVFFKAGFLGQLEAIRDERLSKVFTLFQARAQGKLMRIKFQKILEERDALILIQWNIRAFMAVKNWPWMRLFFKIKPLVKSSEVGEEVAGLKEECAQLQKALEKSEFQREELKAKQVSLTQEKNDLILQLQAEQETLANVEEQCEWLIKSKIQLEARVKELSERVEEEEEINSELTARGRKLEDECFELKKEIDDLETMLVKSEKEKRTTEHKVKNLTEEVEFLNEDISKLNRAAKVVQEAHQQTLDDLHMEEEKLSSLSKANLKLEQQVDELEGALEQERKARMNCERELHKLEGNLKLNRESMENLESSQRHLAEELRKKELELSQMNSKVENEKGLVAQLQKTVKELQTQIKDLKEKLEAERTTRAKMERERADLTQDLADLNERLEEVGGSSLAQLEITKKQETKFQKLHRDMEEATLHFETTSASLKKRHADSLAELEGQVENLQQVKQKLEKDKSDLQLEVDDLLTRVEQMTRAKANAEKLCTLYEERLHEATAKLDKVTQLANDLAAQKTKLWSESGEFLRRLEEKEALINQLSREKSNFTRQIEDLRGQLEKETKSQSALAHALQKAQRDCDLLREQYEEEQEVKAELHRTLSKVNAEMVQWRMKYENNVIQRTEDLEDAKKELAIRLQEAAEAMGVANARNASLERARHQLQLELGDALSDLGKVRSAAARLDQKQLQSGKALADWKQKHEESQALLDASQKEVQALSTELLKLKNTYEESIVGQETLRRENKNLQEEISNLTNQVREGTKNLTEMEKVKKLIEEEKTEVQVTLEETEGALERNESKILHFQLELLEAKAELERKLSEKDEEIENFRRKQQCTIDSLQSSLDSEAKSRIEVTRLKKKMEEDLNEMELQLSCANRQVSEATKSLGQLQIQIKDLQMQLDDSTQLNSDLKEQVAVAERRNSLLQSELEDLRSLQEQTERGRRLSEEELLEATERINLFYTQNTSLLSQKKKLEADVARMQKEAEEVVQECQNAEEKAKKAAIEAANLSEELKKKQDTIAHLERTRENMEQTITDLQKRLAEAEQMALMGSRKQIQKLESRVRELEGELEGEIRRSAEAQRGARRLERCIKELTYQAEEDKKNLSRMQTQMDKLQLKVQNYKQQVEVAETQANQYLSKYKKQQHELNEVKERAEVAESQVNKLKIKAREFGKKVQEE.

The Myosin N-terminal SH3-like domain maps to 29-79 (DGKKKCWIPDGENAYIEAEVKGSEDDGTVIVETADGESLSIKEDKIQQMNP). In terms of domain architecture, Myosin motor spans 83 to 770 (EMIEDMAMLT…FLGQLEAIRD (688 aa)). Lysine 127 is modified (N6,N6,N6-trimethyllysine). Position 176–183 (176–183 (GESGAGKT)) interacts with ATP. 2 actin-binding regions span residues 647 to 669 (LNKL…NPNV) and 749 to 763 (RFGI…GFLG). In terms of domain architecture, IQ spans 773-802 (LSKVFTLFQARAQGKLMRIKFQKILEERDA). A coiled-coil region spans residues 833 to 1926 (KSSEVGEEVA…REFGKKVQEE (1094 aa)).

The protein belongs to the TRAFAC class myosin-kinesin ATPase superfamily. Myosin family. In terms of assembly, muscle myosin is a hexameric protein that consists of 2 heavy chain subunits (MHC), 2 alkali light chain subunits (MLC) and 2 regulatory light chain subunits (MLC-2).

The protein resides in the cytoplasm. Its subcellular location is the myofibril. In terms of biological role, muscle contraction. The sequence is that of Myosin-15 (MYH15) from Homo sapiens (Human).